A 142-amino-acid chain; its full sequence is MPTFNQLVRKGRKVIEKKSNSPALQKGFNSKKKKPTDVNSPQKRGVCTVVKTSTPKKPNSALRKVARVRLTNGIEVSAYIPGIGHNLQEHSVVLIRGGRVKDLPGVRYHIVRGTLDTAGVAKRMQARSKYGAKRPKAGAASK.

The disordered stretch occupies residues 1–43 (MPTFNQLVRKGRKVIEKKSNSPALQKGFNSKKKKPTDVNSPQK). D102 carries the post-translational modification 3-methylthioaspartic acid.

It belongs to the universal ribosomal protein uS12 family. As to quaternary structure, part of the 30S ribosomal subunit. Contacts proteins S8 and S17. May interact with IF1 in the 30S initiation complex.

Its function is as follows. With S4 and S5 plays an important role in translational accuracy. Functionally, interacts with and stabilizes bases of the 16S rRNA that are involved in tRNA selection in the A site and with the mRNA backbone. Located at the interface of the 30S and 50S subunits, it traverses the body of the 30S subunit contacting proteins on the other side and probably holding the rRNA structure together. The combined cluster of proteins S8, S12 and S17 appears to hold together the shoulder and platform of the 30S subunit. The chain is Small ribosomal subunit protein uS12 from Ruminiclostridium cellulolyticum (strain ATCC 35319 / DSM 5812 / JCM 6584 / H10) (Clostridium cellulolyticum).